A 145-amino-acid chain; its full sequence is Acidic phospholipase A2 S1-11 (145 aa).

Positions 1 to 19 (MYPAHLLVLLAVCVSLLGA) are cleaved as a signal peptide. Positions 20-27 (SDMPPQPL) are excised as a propeptide. 5 disulfide bridges follow: C38/C99, C54/C144, C56/C72, C71/C127, and C106/C118. Ca(2+)-binding residues include Y55, G57, and G59. H75 is an active-site residue. D76 provides a ligand contact to Ca(2+). The active site involves D121.

It belongs to the phospholipase A2 family. Group I subfamily. D49 sub-subfamily. It depends on Ca(2+) as a cofactor. In terms of processing, this enzyme lacks two of the seven disulfide bonds found in similar PLA2 proteins. As to expression, expressed by the venom gland.

Its subcellular location is the secreted. The catalysed reaction is a 1,2-diacyl-sn-glycero-3-phosphocholine + H2O = a 1-acyl-sn-glycero-3-phosphocholine + a fatty acid + H(+). Snake venom phospholipase A2 (PLA2) that inhibits collagen-induced platelet aggregation. PLA2 catalyzes the calcium-dependent hydrolysis of the 2-acyl groups in 3-sn-phosphoglycerides. The protein is Acidic phospholipase A2 S1-11 of Austrelaps superbus (Lowland copperhead snake).